The following is a 167-amino-acid chain: Protein-export protein SecB (167 aa).

The protein belongs to the SecB family. In terms of assembly, homotetramer, a dimer of dimers. One homotetramer interacts with 1 SecA dimer.

The protein resides in the cytoplasm. Its function is as follows. One of the proteins required for the normal export of preproteins out of the cell cytoplasm. It is a molecular chaperone that binds to a subset of precursor proteins, maintaining them in a translocation-competent state. It also specifically binds to its receptor SecA. The protein is Protein-export protein SecB of Wolbachia pipientis wMel.